The sequence spans 379 residues: Chaperone protein DnaJ (379 aa).

Positions 5–70 (DYYETLGCDR…QKRAAYDRFG (66 aa)) constitute a J domain. Residues 134–212 (GKTAQIKIPT…CGGAGRVTRE (79 aa)) form a CR-type zinc finger. 8 residues coordinate Zn(2+): cysteine 147, cysteine 150, cysteine 164, cysteine 167, cysteine 186, cysteine 189, cysteine 200, and cysteine 203. CXXCXGXG motif repeat units follow at residues 147-154 (CETCSGTG), 164-171 (CRMCGGAG), 186-193 (CPNCQGRG), and 200-207 (CSDCGGAG).

The protein belongs to the DnaJ family. In terms of assembly, homodimer. Zn(2+) serves as cofactor.

Its subcellular location is the cytoplasm. Functionally, participates actively in the response to hyperosmotic and heat shock by preventing the aggregation of stress-denatured proteins and by disaggregating proteins, also in an autonomous, DnaK-independent fashion. Unfolded proteins bind initially to DnaJ; upon interaction with the DnaJ-bound protein, DnaK hydrolyzes its bound ATP, resulting in the formation of a stable complex. GrpE releases ADP from DnaK; ATP binding to DnaK triggers the release of the substrate protein, thus completing the reaction cycle. Several rounds of ATP-dependent interactions between DnaJ, DnaK and GrpE are required for fully efficient folding. Also involved, together with DnaK and GrpE, in the DNA replication of plasmids through activation of initiation proteins. The polypeptide is Chaperone protein DnaJ (Xanthobacter autotrophicus (strain ATCC BAA-1158 / Py2)).